The chain runs to 170 residues: Interferon gamma (170 aa).

The signal sequence occupies residues 1–20 (MNSRLCIMALLLCFSQALLG). Residues N36 and N103 are each glycosylated (N-linked (GlcNAc...) asparagine).

The protein belongs to the type II (or gamma) interferon family. In terms of assembly, homodimer. Interacts with IFNGR1 (via extracellular domain); this interaction promotes IFNGR1 dimerization. Released primarily from activated T lymphocytes.

The protein localises to the secreted. In terms of biological role, type II interferon produced by immune cells such as T-cells and NK cells that plays crucial roles in antimicrobial, antiviral, and antitumor responses by activating effector immune cells and enhancing antigen presentation. Primarily signals through the JAK-STAT pathway after interaction with its receptor IFNGR1 to affect gene regulation. Upon IFNG binding, IFNGR1 intracellular domain opens out to allow association of downstream signaling components JAK2, JAK1 and STAT1, leading to STAT1 activation, nuclear translocation and transcription of IFNG-regulated genes. Many of the induced genes are transcription factors such as IRF1 that are able to further drive regulation of a next wave of transcription. Plays a role in class I antigen presentation pathway by inducing a replacement of catalytic proteasome subunits with immunoproteasome subunits. In turn, increases the quantity, quality, and repertoire of peptides for class I MHC loading. Increases the efficiency of peptide generation also by inducing the expression of activator PA28 that associates with the proteasome and alters its proteolytic cleavage preference. Up-regulates as well MHC II complexes on the cell surface by promoting expression of several key molecules such as cathepsins B/CTSB, H/CTSH, and L/CTSL. Participates in the regulation of hematopoietic stem cells during development and under homeostatic conditions by affecting their development, quiescence, and differentiation. This Sigmodon hispidus (Hispid cotton rat) protein is Interferon gamma (IFNG).